A 471-amino-acid polypeptide reads, in one-letter code: dTDP-4-dehydro-6-deoxy-alpha-D-glucopyranose 2,3-dehydratase (471 aa).

Residues Trp-67, 155-159 (TRSNY), Ser-193, Asn-238, Trp-288, Arg-351, 367-369 (QCT), 372-373 (NY), and 405-408 (EGGR) each bind dTDP-4-dehydro-6-deoxy-alpha-D-glucose.

The protein belongs to the hexose 2,3-dehydratase family. As to quaternary structure, homodimer.

It catalyses the reaction dTDP-4-dehydro-6-deoxy-alpha-D-glucose = dTDP-3,4-didehydro-2,6-dideoxy-alpha-D-glucose + H2O. It functions in the pathway antibiotic biosynthesis. In terms of biological role, involved in the biosynthesis of the 2,3,6-trideoxysugar L-epivancosamine, the terminal sugar added to the aglycone scaffold of chloroeremomycin, a member of the glycopeptide antibiotics vancomycin family. Catalyzes the removal of the hydroxyl group at position C-2 of the hexose ring of dTDP-4-dehydro-6-deoxy-alpha-D-glucopyranose, and the oxidation of the hydroxyl group at position C-3 to form a carbonyl functionality. The product of the reaction, dTDP-2,6-dideoxy-D-glycero-hex-2-enos-4-ulose, is a highly unstable diketosugar, which spontaneously forms dTDP-3,4-didehydro-2,6-dideoxy-alpha-D-glucose. This is dTDP-4-dehydro-6-deoxy-alpha-D-glucopyranose 2,3-dehydratase from Amycolatopsis orientalis (Nocardia orientalis).